Reading from the N-terminus, the 406-residue chain is Imidazolonepropionase (406 aa).

2 residues coordinate Fe(3+): His-72 and His-74. His-72 and His-74 together coordinate Zn(2+). 3 residues coordinate 4-imidazolone-5-propanoate: Arg-81, Tyr-144, and His-177. Tyr-144 contributes to the N-formimidoyl-L-glutamate binding site. His-242 contributes to the Fe(3+) binding site. His-242 is a binding site for Zn(2+). Gln-245 provides a ligand contact to 4-imidazolone-5-propanoate. Asp-317 lines the Fe(3+) pocket. Asp-317 provides a ligand contact to Zn(2+). N-formimidoyl-L-glutamate contacts are provided by Asn-319 and Gly-321. Thr-322 serves as a coordination point for 4-imidazolone-5-propanoate.

The protein belongs to the metallo-dependent hydrolases superfamily. HutI family. Zn(2+) is required as a cofactor. The cofactor is Fe(3+).

The protein localises to the cytoplasm. The catalysed reaction is 4-imidazolone-5-propanoate + H2O = N-formimidoyl-L-glutamate. Its pathway is amino-acid degradation; L-histidine degradation into L-glutamate; N-formimidoyl-L-glutamate from L-histidine: step 3/3. Functionally, catalyzes the hydrolytic cleavage of the carbon-nitrogen bond in imidazolone-5-propanoate to yield N-formimidoyl-L-glutamate. It is the third step in the universal histidine degradation pathway. This is Imidazolonepropionase from Yersinia pseudotuberculosis serotype O:3 (strain YPIII).